A 198-amino-acid chain; its full sequence is Sporulation-specific protein 16 (198 aa).

In terms of biological role, necessary for efficient spore formation. This Saccharomyces cerevisiae (strain ATCC 204508 / S288c) (Baker's yeast) protein is Sporulation-specific protein 16 (SPO16).